A 124-amino-acid chain; its full sequence is Small ribosomal subunit protein uS12 (124 aa).

Residues 1–24 are disordered; the sequence is MTTINQLVRKPRQATTYKSASPAL. The residue at position 89 (Asp89) is a 3-methylthioaspartic acid.

The protein belongs to the universal ribosomal protein uS12 family. Part of the 30S ribosomal subunit. Contacts proteins S8 and S17. May interact with IF1 in the 30S initiation complex.

Functionally, with S4 and S5 plays an important role in translational accuracy. Its function is as follows. Interacts with and stabilizes bases of the 16S rRNA that are involved in tRNA selection in the A site and with the mRNA backbone. Located at the interface of the 30S and 50S subunits, it traverses the body of the 30S subunit contacting proteins on the other side and probably holding the rRNA structure together. The combined cluster of proteins S8, S12 and S17 appears to hold together the shoulder and platform of the 30S subunit. In Xanthomonas axonopodis pv. citri (strain 306), this protein is Small ribosomal subunit protein uS12.